Consider the following 72-residue polypeptide: Translation initiation factor IF-1 (72 aa).

Residues 1-72 (MAKEDSIRMQ…NKGRIVYRER (72 aa)) form the S1-like domain.

It belongs to the IF-1 family. Component of the 30S ribosomal translation pre-initiation complex which assembles on the 30S ribosome in the order IF-2 and IF-3, IF-1 and N-formylmethionyl-tRNA(fMet); mRNA recruitment can occur at any time during PIC assembly.

The protein resides in the cytoplasm. Functionally, one of the essential components for the initiation of protein synthesis. Stabilizes the binding of IF-2 and IF-3 on the 30S subunit to which N-formylmethionyl-tRNA(fMet) subsequently binds. Helps modulate mRNA selection, yielding the 30S pre-initiation complex (PIC). Upon addition of the 50S ribosomal subunit IF-1, IF-2 and IF-3 are released leaving the mature 70S translation initiation complex. This chain is Translation initiation factor IF-1, found in Halorhodospira halophila (strain DSM 244 / SL1) (Ectothiorhodospira halophila (strain DSM 244 / SL1)).